The sequence spans 355 residues: WAT1-related protein At3g28130 (355 aa).

10 helical membrane passes run 11 to 31 (AVLLTAMLATETGNVAMNTLF), 42 to 62 (YTFLIYSYLIGSIVLLPSHIF), 80 to 100 (IGVLGLLGSTYLITGFIGIEY), 104 to 124 (TLASAISNINPAITFILAIIF), 136 to 156 (SVAKMVGTIVSLVGALVVVLY), 186 to 206 (WIIGGCLLAIKDTLVPVAFIL), 218 to 238 (FTVSFFYFLIASILTSLIGIV), 244 to 264 (PSIWIIHFDITLVCIVVGGIF), 290 to 310 (LSILIAVIMGAIFLGDSFYLG), and 311 to 331 (SLVGGILISLGFYTVMWGKAK). Residues 29 to 154 (TLFKAATSKG…VSLVGALVVV (126 aa)) enclose the EamA domain.

It belongs to the drug/metabolite transporter (DMT) superfamily. Plant drug/metabolite exporter (P-DME) (TC 2.A.7.4) family.

The protein resides in the membrane. This chain is WAT1-related protein At3g28130, found in Arabidopsis thaliana (Mouse-ear cress).